A 390-amino-acid chain; its full sequence is Phosphoprotein (390 aa).

Residues Thr10 and Thr16 each carry the phosphothreonine modification. Positions 54 to 65 (QKNIQHPTASHQ) are enriched in polar residues. Disordered regions lie at residues 54-98 (QKNI…EPLF) and 144-183 (RTST…KERS). Ser69 is subject to Phosphoserine. Residues Thr91, Thr150, and Thr164 each carry the phosphothreonine modification. Ser187 is modified (phosphoserine). Thr249 is subject to Phosphothreonine. Position 256 is a phosphoserine (Ser256). A phosphothreonine mark is found at Thr257 and Thr281. A phosphoserine mark is found at Ser291 and Ser293. Thr297 carries the post-translational modification Phosphothreonine. Phosphoserine occurs at positions 300 and 373. The interaction with the nucleoprotein stretch occupies residues 342 to 390 (AGRKVMITKMITDCVANPQMKQAFEQRLAKASTEDALNDIKKDIIRSAI). Phosphothreonine is present on Thr374.

It belongs to the rubulavirus/avulavirus P protein family. As to quaternary structure, homotetramer. Interacts (via multimerization domain) with polymerase L; this interaction forms the polymerase L-P complex. Interacts (via N-terminus) with N0 (via Ncore); this interaction allows P to chaperon N0 to avoid N polymerization before encapsidation. Interacts (via C-terminus) with N-RNA template; this interaction positions the polymerase on the template for both transcription and replication. Interacts with host RPS6KB1 kinase; this interaction may play a role in the viral replication and transcription.

Its function is as follows. Essential cofactor of the RNA polymerase L that plays a central role in the transcription and replication by forming the polymerase complex with RNA polymerase L and recruiting L to the genomic N-RNA template for RNA synthesis. Also plays a central role in the encapsidation of nascent RNA chains by forming the encapsidation complex with the nucleocapsid protein N (N-P complex). Acts as a chaperone for newly synthesized free N protein, so-called N0, allowing encapsidation of nascent RNA chains during replication. The nucleoprotein protein N prevents excessive phosphorylation of P, which leads to down-regulation of viral transcription/ replication. Participates, together with N, in the formation of viral factories (viroplasms), which are large inclusions in the host cytoplasm where replication takes place. This chain is Phosphoprotein (P/V), found in Homo sapiens (Human).